Here is a 160-residue protein sequence, read N- to C-terminus: Large ribosomal subunit protein eL29 (160 aa).

Residues 1 to 26 (MAKSKNHTTHNQSRKWHRNGIKKPRS) show a composition bias toward basic residues. A disordered region spans residues 1 to 32 (MAKSKNHTTHNQSRKWHRNGIKKPRSQRYESL). N6-methyllysine is present on Lys-5. Ser-31 carries the post-translational modification Phosphoserine. The residue at position 33 (Lys-33) is an N6-acetyllysine. Residues 119–160 (CRPKSQAKAQSKAKATAGGTAAAPVPPASAPKGAQAPTKAPQ) form a disordered region. The span at 121–141 (PKSQAKAQSKAKATAGGTAAA) shows a compositional bias: low complexity.

This sequence belongs to the eukaryotic ribosomal protein eL29 family. In terms of assembly, component of the large ribosomal subunit.

It is found in the cytoplasm. In terms of biological role, component of the large ribosomal subunit. The ribosome is a large ribonucleoprotein complex responsible for the synthesis of proteins in the cell. This chain is Large ribosomal subunit protein eL29 (RPL29), found in Sus scrofa (Pig).